A 73-amino-acid chain; its full sequence is Dipeptidyl peptidase 3 (73 aa).

It belongs to the peptidase M49 family. Zn(2+) is required as a cofactor.

It localises to the membrane. The enzyme catalyses Release of an N-terminal dipeptide from a peptide comprising four or more residues, with broad specificity. Also acts on dipeptidyl 2-naphthylamides.. Its function is as follows. Degrades neuropeptide proctolin (RYLPT) by cleavage between Tyr and Leu residues. The sequence is that of Dipeptidyl peptidase 3 from Blaberus craniifer (Death's head cockroach).